The sequence spans 574 residues: Pyruvate kinase PKLR (574 aa).

4 positions are modified to phosphoserine: serine 2, serine 19, serine 26, and serine 43. Arginine 116 is a substrate binding site. Residues asparagine 118, serine 120, aspartate 156, and threonine 157 each coordinate K(+). 118-121 (NFSH) contributes to the ATP binding site. Arginine 163 and lysine 250 together coordinate ATP. Serine 292 is subject to Phosphoserine. Lysine 313 is a substrate binding site. Mn(2+) is bound at residue glutamate 315. Glycine 338, aspartate 339, and threonine 371 together coordinate substrate. Aspartate 339 is a binding site for Mn(2+). Beta-D-fructose 1,6-bisphosphate is bound by residues 475 to 480 (TTTGRS), tryptophan 525, arginine 532, and 559 to 564 (RPGSGY).

This sequence belongs to the pyruvate kinase family. Homotetramer. It depends on Mg(2+) as a cofactor. Mn(2+) is required as a cofactor. K(+) serves as cofactor.

The enzyme catalyses pyruvate + ATP = phosphoenolpyruvate + ADP + H(+). Its pathway is carbohydrate degradation; glycolysis; pyruvate from D-glyceraldehyde 3-phosphate: step 5/5. Its activity is regulated as follows. Allosterically activated by fructose 1,6-bisphosphate. Its function is as follows. Pyruvate kinase that catalyzes the conversion of phosphoenolpyruvate to pyruvate with the synthesis of ATP, and which plays a key role in glycolysis. This chain is Pyruvate kinase PKLR (PKLR), found in Homo sapiens (Human).